Reading from the N-terminus, the 172-residue chain is Large ribosomal subunit protein uL10 (172 aa).

This sequence belongs to the universal ribosomal protein uL10 family. In terms of assembly, part of the ribosomal stalk of the 50S ribosomal subunit. The N-terminus interacts with L11 and the large rRNA to form the base of the stalk. The C-terminus forms an elongated spine to which L12 dimers bind in a sequential fashion forming a multimeric L10(L12)X complex.

Forms part of the ribosomal stalk, playing a central role in the interaction of the ribosome with GTP-bound translation factors. The polypeptide is Large ribosomal subunit protein uL10 (Ruegeria pomeroyi (strain ATCC 700808 / DSM 15171 / DSS-3) (Silicibacter pomeroyi)).